The chain runs to 146 residues: 3-dehydroquinate dehydratase (146 aa).

Catalysis depends on Y22, which acts as the Proton acceptor. Positions 73, 79, and 86 each coordinate substrate. The active-site Proton donor is H101. Substrate-binding positions include 102–103 (IS) and R112.

The protein belongs to the type-II 3-dehydroquinase family. In terms of assembly, homododecamer.

It carries out the reaction 3-dehydroquinate = 3-dehydroshikimate + H2O. It participates in metabolic intermediate biosynthesis; chorismate biosynthesis; chorismate from D-erythrose 4-phosphate and phosphoenolpyruvate: step 3/7. Catalyzes a trans-dehydration via an enolate intermediate. This Corynebacterium pseudotuberculosis (strain C231) protein is 3-dehydroquinate dehydratase (aroQ).